We begin with the raw amino-acid sequence, 110 residues long: UPF0122 protein SaurJH9_1295 (110 aa).

Belongs to the UPF0122 family.

Functionally, might take part in the signal recognition particle (SRP) pathway. This is inferred from the conservation of its genetic proximity to ftsY/ffh. May be a regulatory protein. The sequence is that of UPF0122 protein SaurJH9_1295 from Staphylococcus aureus (strain JH9).